Consider the following 313-residue polypeptide: Ribose-phosphate pyrophosphokinase (313 aa).

ATP contacts are provided by residues 37–39 and 96–97; these read DGE and RQ. His131 and Asp170 together coordinate Mg(2+). Lys193 is an active-site residue. D-ribose 5-phosphate contacts are provided by residues Arg195, Asp219, and 223–227; that span reads DTAGT.

This sequence belongs to the ribose-phosphate pyrophosphokinase family. Class I subfamily. As to quaternary structure, homohexamer. Mg(2+) serves as cofactor.

It is found in the cytoplasm. The catalysed reaction is D-ribose 5-phosphate + ATP = 5-phospho-alpha-D-ribose 1-diphosphate + AMP + H(+). The protein operates within metabolic intermediate biosynthesis; 5-phospho-alpha-D-ribose 1-diphosphate biosynthesis; 5-phospho-alpha-D-ribose 1-diphosphate from D-ribose 5-phosphate (route I): step 1/1. In terms of biological role, involved in the biosynthesis of the central metabolite phospho-alpha-D-ribosyl-1-pyrophosphate (PRPP) via the transfer of pyrophosphoryl group from ATP to 1-hydroxyl of ribose-5-phosphate (Rib-5-P). In Pseudomonas syringae pv. tomato (strain ATCC BAA-871 / DC3000), this protein is Ribose-phosphate pyrophosphokinase.